The primary structure comprises 258 residues: MADSLVHSLASSSQLEAFDSFEYAEELCTLGSEWIQEAGVLLNLTQNCVIVCLILFRRYCTLYPPRVPDLDAIVMACVSIGSKTTETPASVQDICNVVVYLKERFKDTNFEARGFIAHDLYSEEMYSSRNRLSNMELEVLRALNFDTHIVIPHKLAIHYLQTLQLIDNKKLLQITWNFLNDASRTRLCVLYPPFSLACGCIAMAARVIGMKLPKDWYRVFDTTKEEIDSLTSILENFYKTSAIAHKTLYLIFTEQVSA.

The Cyclin N-terminal domain occupies 16–148 (EAFDSFEYAE…VLRALNFDTH (133 aa)).

It belongs to the cyclin family. Cyclin L subfamily.

Its subcellular location is the cytoplasm. The protein resides in the nucleus. This is an uncharacterized protein from Schizosaccharomyces pombe (strain 972 / ATCC 24843) (Fission yeast).